The sequence spans 374 residues: Putative glutamate--cysteine ligase 2 (374 aa).

This sequence belongs to the glutamate--cysteine ligase type 2 family. YbdK subfamily.

It catalyses the reaction L-cysteine + L-glutamate + ATP = gamma-L-glutamyl-L-cysteine + ADP + phosphate + H(+). Its function is as follows. ATP-dependent carboxylate-amine ligase which exhibits weak glutamate--cysteine ligase activity. This is Putative glutamate--cysteine ligase 2 from Leptothrix cholodnii (strain ATCC 51168 / LMG 8142 / SP-6) (Leptothrix discophora (strain SP-6)).